Consider the following 566-residue polypeptide: Mannitol 2-dehydrogenase (566 aa).

106–117 (IVHVGVGGFHRA) is a binding site for NAD(+).

Belongs to the mannitol dehydrogenase family. In terms of assembly, monomer.

It catalyses the reaction D-mannitol + NAD(+) = D-fructose + NADH + H(+). Catalyzes the NAD(H)-dependent interconversion of D-fructose and D-mannitol in the mannitol metabolic pathway. This Pyrenophora tritici-repentis (strain Pt-1C-BFP) (Wheat tan spot fungus) protein is Mannitol 2-dehydrogenase.